We begin with the raw amino-acid sequence, 170 residues long: Transcriptional repressor NrdR (170 aa).

The segment at 3–34 is a zinc-finger region; the sequence is CPFCGTQDTKVVDSRLVSEGAQVRRRRTCIHC. The ATP-cone domain maps to 49–139; that stretch reads PKLIKSDGSR…VYRSFKDISE (91 aa). The tract at residues 151-170 is disordered; sequence SVSIPKSKKTAPESKKEDQA. Residues 160 to 170 are compositionally biased toward basic and acidic residues; that stretch reads TAPESKKEDQA.

Belongs to the NrdR family. The cofactor is Zn(2+).

Its function is as follows. Negatively regulates transcription of bacterial ribonucleotide reductase nrd genes and operons by binding to NrdR-boxes. The protein is Transcriptional repressor NrdR of Marinomonas sp. (strain MWYL1).